The sequence spans 464 residues: tRNA modification GTPase MnmE (464 aa).

3 residues coordinate (6S)-5-formyl-5,6,7,8-tetrahydrofolate: Arg25, Glu87, and Lys130. The TrmE-type G domain maps to 226-386 (GLSVVLAGQP…LRAELLRIAG (161 aa)). A K(+)-binding site is contributed by Asn236. GTP-binding positions include 236–241 (NVGKSS), 255–261 (TPIAGTT), and 280–283 (DTAG). Residue Ser240 coordinates Mg(2+). The K(+) site is built by Thr255, Ile257, and Thr260. Thr261 serves as a coordination point for Mg(2+). Residue Lys464 coordinates (6S)-5-formyl-5,6,7,8-tetrahydrofolate.

The protein belongs to the TRAFAC class TrmE-Era-EngA-EngB-Septin-like GTPase superfamily. TrmE GTPase family. In terms of assembly, homodimer. Heterotetramer of two MnmE and two MnmG subunits. The cofactor is K(+).

The protein localises to the cytoplasm. In terms of biological role, exhibits a very high intrinsic GTPase hydrolysis rate. Involved in the addition of a carboxymethylaminomethyl (cmnm) group at the wobble position (U34) of certain tRNAs, forming tRNA-cmnm(5)s(2)U34. In Burkholderia orbicola (strain AU 1054), this protein is tRNA modification GTPase MnmE.